The primary structure comprises 816 residues: Glycerol-3-phosphate acyltransferase (816 aa).

Positions 298–303 (CHRSHM) match the HXXXXD motif motif.

It belongs to the GPAT/DAPAT family.

It is found in the cell membrane. The catalysed reaction is sn-glycerol 3-phosphate + an acyl-CoA = a 1-acyl-sn-glycero-3-phosphate + CoA. Its pathway is phospholipid metabolism; CDP-diacylglycerol biosynthesis; CDP-diacylglycerol from sn-glycerol 3-phosphate: step 1/3. In Hamiltonella defensa subsp. Acyrthosiphon pisum (strain 5AT), this protein is Glycerol-3-phosphate acyltransferase.